The chain runs to 269 residues: 3-methyl-2-oxobutanoate hydroxymethyltransferase (269 aa).

Residues aspartate 49 and aspartate 88 each contribute to the Mg(2+) site. 3-methyl-2-oxobutanoate contacts are provided by residues 49-50, aspartate 88, and lysine 118; that span reads DS. Glutamate 120 serves as a coordination point for Mg(2+). Residue glutamate 186 is the Proton acceptor of the active site.

The protein belongs to the PanB family. In terms of assembly, homodecamer; pentamer of dimers. It depends on Mg(2+) as a cofactor.

It localises to the cytoplasm. It carries out the reaction 3-methyl-2-oxobutanoate + (6R)-5,10-methylene-5,6,7,8-tetrahydrofolate + H2O = 2-dehydropantoate + (6S)-5,6,7,8-tetrahydrofolate. It participates in cofactor biosynthesis; (R)-pantothenate biosynthesis; (R)-pantoate from 3-methyl-2-oxobutanoate: step 1/2. Its function is as follows. Catalyzes the reversible reaction in which hydroxymethyl group from 5,10-methylenetetrahydrofolate is transferred onto alpha-ketoisovalerate to form ketopantoate. This is 3-methyl-2-oxobutanoate hydroxymethyltransferase from Pelobacter propionicus (strain DSM 2379 / NBRC 103807 / OttBd1).